The chain runs to 557 residues: CCR4-NOT transcription complex subunit 6 (557 aa).

LRR repeat units lie at residues His-52–Leu-73, Asn-75–Met-96, Ser-98–Phe-120, and Gln-121–Pro-143. A nuclease domain region spans residues Leu-153–Arg-557. Residue Glu-240 coordinates Mg(2+). Substrate contacts are provided by Glu-240, Glu-276, His-361, and Pro-366. Mg(2+) is bound at residue Asp-412. Catalysis depends on Asp-412, which acts as the Proton donor/acceptor. Residues Asn-414, Asn-481, and Phe-486 each contribute to the substrate site.

It belongs to the CCR4/nocturin family. In terms of assembly, component of the CCR4-NOT complex; distinct complexes seem to exist that differ in the participation of probably mutually exclusive catalytic subunits; the complex contains two deadenylase subunits, CNOT6 or CNOT6L, and CNOT7 or CNOT8. Interacts with CNOT7 and CNOT8. Interacts with UNR. Interacts with ZFP36L1 (via N-terminus). Interacts with ZNF335. The cofactor is Mg(2+).

The protein localises to the cytoplasm. It localises to the nucleus. It catalyses the reaction Exonucleolytic cleavage of poly(A) to 5'-AMP.. Poly(A) nuclease with 3'-5' RNase activity. Catalytic component of the CCR4-NOT complex which is one of the major cellular mRNA deadenylases and is linked to various cellular processes including bulk mRNA degradation, miRNA-mediated repression, translational repression during translational initiation and general transcription regulation. Additional complex functions may be a consequence of its influence on mRNA expression. Involved in mRNA decay mediated by the major-protein-coding determinant of instability (mCRD) of the FOS gene in the cytoplasm. In the presence of ZNF335, enhances ligand-dependent transcriptional activity of nuclear hormone receptors, including RARA. The increase of ligand-dependent ESR1-mediated transcription is much smaller, if any. Mediates cell proliferation and cell survival and prevents cellular senescence. This is CCR4-NOT transcription complex subunit 6 (CNOT6) from Homo sapiens (Human).